A 100-amino-acid polypeptide reads, in one-letter code: Large ribosomal subunit protein uL23 (100 aa).

It belongs to the universal ribosomal protein uL23 family. As to quaternary structure, part of the 50S ribosomal subunit. Contacts protein L29, and trigger factor when it is bound to the ribosome.

In terms of biological role, one of the early assembly proteins it binds 23S rRNA. One of the proteins that surrounds the polypeptide exit tunnel on the outside of the ribosome. Forms the main docking site for trigger factor binding to the ribosome. This Synechococcus elongatus (strain ATCC 33912 / PCC 7942 / FACHB-805) (Anacystis nidulans R2) protein is Large ribosomal subunit protein uL23.